A 273-amino-acid chain; its full sequence is SPbeta prophage-derived uncharacterized protein YomF (273 aa).

Residues 119–149 are a coiled coil; it reads VIETLQGLIDEAEDTIIRMNERIAECERVTK.

This Bacillus subtilis (strain 168) protein is SPbeta prophage-derived uncharacterized protein YomF (yomF).